A 428-amino-acid polypeptide reads, in one-letter code: MSNVLPKGVFDIFPYVTNSKNLWRNSFLWKTVEHAAHRICNLYGFDEIRTPVFEKTETFLRVGEHSDIVKKEVYTFLDKKGRSLTLRPEGTAAVVRALLDHSADMRKDNKIYYILPMFRYERQQSGRYRQHHQFGLEAIGVRHPLRDAEVLSLLWDFYAAVGLKHMQIQVNFLGGRKTRARYDEALREFFRKDLDKLSTLSQERFHANLLRILDSKEPEDQAFIEQAPSILDYVDDQDLNYFDSVLAELKVLGIPYKINPRLVRGLDYYTDLVFEAVTVVGDHSYALGGGGRYDELVAQSGGPAMPAFGFGVGLERVIQTLLEQGAALPTAPRRLRLIPMDESADAFCFSWAKHLRHLGVATEVDWAHKKPKTALKDAADQQVGFVCFVGEQELSTKQFIVKDMSLHQSFSGAQQDVEQRLVYEVQNA.

The protein belongs to the class-II aminoacyl-tRNA synthetase family. In terms of assembly, homodimer.

Its subcellular location is the cytoplasm. It catalyses the reaction tRNA(His) + L-histidine + ATP = L-histidyl-tRNA(His) + AMP + diphosphate + H(+). The sequence is that of Histidine--tRNA ligase (hisS) from Chlamydia muridarum (strain MoPn / Nigg).